The sequence spans 1240 residues: Neurofascin (1240 aa).

An N-terminal signal peptide occupies residues 1–24; the sequence is MARQQAPPWVHIALILFLLSLGGA. Over 25-1110 the chain is Extracellular; the sequence is IEIPMDPSIQ…NQADIATQGW (1086 aa). Ig-like C2-type domains lie at 41-137, 143-230, 244-332, 337-424, 430-517, and 521-603; these read PTIT…LQVS, PKEN…NPFT, PSFM…ISVR, PYWL…AFVS, PRML…VRLE, and PTRI…QDLA. Disulfide bonds link cysteine 63/cysteine 118, cysteine 162/cysteine 213, cysteine 268/cysteine 316, and cysteine 358/cysteine 408. N-linked (GlcNAc...) asparagine glycosylation occurs at asparagine 305. 2 N-linked (GlcNAc...) asparagine glycosylation sites follow: asparagine 409 and asparagine 446. 2 cysteine pairs are disulfide-bonded: cysteine 452-cysteine 501 and cysteine 543-cysteine 592. Tyrosine 481 carries the phosphotyrosine modification. Asparagine 483 is a glycosylation site (N-linked (GlcNAc...) asparagine). Serine 485 bears the Phosphoserine mark. Fibronectin type-III domains follow at residues 630–725, 727–823, 827–923, and 1007–1099; these read RPRD…TSGA, PESN…SGED, APRR…PNEA, and APDE…TAYT. Residues 710 to 740 are disordered; the sequence is SSHPSLPSERYRTSGAPPESNPSDVKGEGTR. Residues asparagine 752, asparagine 778, asparagine 866, and asparagine 881 are each glycosylated (N-linked (GlcNAc...) asparagine). Residues 902–942 form a disordered region; sequence ARTQVGSGEAATEESPAPPNEATPTAAPPTLPPTTVGTTGL. The segment covering 907–916 has biased composition (low complexity); the sequence is GSGEAATEES. Residues 917-933 are compositionally biased toward pro residues; the sequence is PAPPNEATPTAAPPTLP. The helical transmembrane segment at 1111–1131 threads the bilayer; sequence FIGLMCAIALLVLILLIVCFI. At 1132–1240 the chain is on the cytoplasmic side; that stretch reads KRSRGGKYPV…SPVNAIYSLA (109 aa). A disordered region spans residues 1141-1240; the sequence is VREKKDVPLG…SPVNAIYSLA (100 aa). Over residues 1154–1165 the composition is skewed to acidic residues; that stretch reads PKEEDGSFDYSD. Phosphoserine occurs at positions 1160, 1174, 1187, 1190, 1226, 1227, and 1231. Residues 1171–1184 are compositionally biased toward polar residues; that stretch reads LQGSQTSLDGTIKQ.

The protein belongs to the immunoglobulin superfamily. L1/neurofascin/NgCAM family. Horseshoe-shaped homodimer. Probable constituent of a NFASC/NRCAM/ankyrin-G complex. Associates with the sodium channel beta-1 (SCN1B) and beta-3 (SCN3B) subunits. Interacts with GLDN/gliomedin. Interacts with MYOC.

The protein resides in the cell membrane. Its function is as follows. Cell adhesion, ankyrin-binding protein which may be involved in neurite extension, axonal guidance, synaptogenesis, myelination and neuron-glial cell interactions. This is Neurofascin (Nfasc) from Mus musculus (Mouse).